The sequence spans 146 residues: Large ribosomal subunit protein mL49 (146 aa).

The N-terminal 38 residues, 1–38, are a transit peptide targeting the mitochondrion; the sequence is MISSCVTRCFGRGKCLPGPATASIYQTIRCISTNSNKA.

Belongs to the mitochondrion-specific ribosomal protein mL49 family. In terms of assembly, component of the mitochondrial large ribosomal subunit (mt-LSU). Mature yeast 74S mitochondrial ribosomes consist of a small (37S) and a large (54S) subunit. The 37S small subunit contains a 15S ribosomal RNA (15S mt-rRNA) and 34 different proteins. The 54S large subunit contains a 21S rRNA (21S mt-rRNA) and 46 different proteins.

The protein resides in the mitochondrion. Functionally, component of the mitochondrial ribosome (mitoribosome), a dedicated translation machinery responsible for the synthesis of mitochondrial genome-encoded proteins, including at least some of the essential transmembrane subunits of the mitochondrial respiratory chain. The mitoribosomes are attached to the mitochondrial inner membrane and translation products are cotranslationally integrated into the membrane. The protein is Large ribosomal subunit protein mL49 (IMG2) of Saccharomyces cerevisiae (strain ATCC 204508 / S288c) (Baker's yeast).